A 169-amino-acid chain; its full sequence is Methane monooxygenase component A gamma chain (169 aa).

In terms of assembly, m.trichosporium has two forms of methane monooxygenase, a soluble and a membrane-bound type. The soluble type consists of four components (A to D): protein A, comprising three chains, in an alpha-2, beta-2, gamma-2 configuration, is a nonheme iron protein containing an unusual mu-hydroxo bridge structure at its active site and interacts with both oxygen and methane.

It carries out the reaction methane + NADH + O2 + H(+) = methanol + NAD(+) + H2O. The catalysed reaction is methane + NADPH + O2 + H(+) = methanol + NADP(+) + H2O. Its function is as follows. Responsible for the initial oxygenation of methane to methanol in methanotrophs. It also catalyzes the monohydroxylation of a variety of unactivated alkenes, alicyclic, aromatic and heterocyclic compounds. The chain is Methane monooxygenase component A gamma chain (mmoZ) from Methylosinus trichosporium.